Here is an 86-residue protein sequence, read N- to C-terminus: Large ribosomal subunit protein uL23 (86 aa).

This sequence belongs to the universal ribosomal protein uL23 family. As to quaternary structure, part of the 50S ribosomal subunit. Contacts protein L29.

Functionally, binds to 23S rRNA. One of the proteins that surrounds the polypeptide exit tunnel on the outside of the ribosome. In Caldivirga maquilingensis (strain ATCC 700844 / DSM 13496 / JCM 10307 / IC-167), this protein is Large ribosomal subunit protein uL23.